The sequence spans 767 residues: MGCTASKVEQEDTVRRCKERRRHMKEAVASRQQLASAHADYLRSLRLTAAALSRFAQGHPSLAVSHHTAPVLLTTAAPALAPTPTPPPPSSTASSSLPPPTPLLPKHQQAPPPPPPTQSHQPPPPVAVRAPRGGPRRLKVPHILSDSSVASPARSSFRKPVVGTPSSSSAWDWENFYPPSPPDSEFFDRRKADLEEANRLRELEEEEKARGYLHPHHLKEEDEVDDDDDEREEEMHCGGWEDDDDHYASTTTSETRSEEGEMGNRSECGFAARSEYGGTAPSEYAAAPLPLPLRRRDERSEAGDSSSTVTAAAEMRMVIRHRTLAEIVAAIEEYFVKAAEAGNGVSELLEASRAQLDRNFRQLKKTVYHSNSLLSSLSSTWTSKPPLAVRYKLDTNALEMESMEGKSHGSTLERLLAWEKKLYQEVKARESVKIEHEKKLSTLQSLEYRGRDSTKLDKTKASINKLQSLIIVTSQAATTTSSAIVRVRDNELAPQLVELCFALLSMWRSMNHFHEIQNEIVQQVRGLVDNSMAESTSDLHRLATRDLEAAVSAWHSNFNRLIKYQRDYIRALYGWLKLTLFQVDSNIPQEAYTSLISRELTTFCDEWKQALDRLPDASASEAIKSFVNVVHVIYTKQAEEMKIKKRTETYSKELEKKTNSLRAIEKKYYQSYSMVGLGLPGSGRDGIESHSFDARDPLAEKKTEIAQCRRKVEDEMTRHAKAVEVTRSMTLNNIQTGLPGMFQAIAGFSGTVVEALDVVCRRAGSVR.

3 disordered regions span residues Met1 to Arg20, Pro78 to Phe187, and Arg201 to Val309. Pro residues-rich tracts occupy residues Ala81 to Ser90 and Ala110 to Val126. Low complexity predominate over residues Ser145 to Ser155. Over residues Arg201–Arg210 the composition is skewed to basic and acidic residues. Positions Glu221–Glu232 are enriched in acidic residues. The segment covering Thr255–Asn264 has biased composition (basic and acidic residues).

Highly expressed in young leaves and panicles. Expressed at low levels in roots.

Its subcellular location is the cell membrane. In terms of biological role, involved in the regulation of leaf shape formation. May function by coordinating the expression of genes associated with leaf and bulliform cell development. This Oryza sativa subsp. japonica (Rice) protein is Protein ROLLING AND ERECT LEAF 2.